Reading from the N-terminus, the 141-residue chain is Ribosome maturation factor RimP (141 aa).

The protein belongs to the RimP family.

Its subcellular location is the cytoplasm. In terms of biological role, required for maturation of 30S ribosomal subunits. In Laribacter hongkongensis (strain HLHK9), this protein is Ribosome maturation factor RimP.